A 537-amino-acid chain; its full sequence is CTP synthase (537 aa).

Positions 1–268 (MSFKCIFLTG…STFITEKLGL (268 aa)) are amidoligase domain. S14 contributes to the CTP binding site. S14 is a binding site for UTP. 15 to 20 (SLGKGL) lines the ATP pocket. An L-glutamine-binding site is contributed by Y55. ATP is bound at residue D72. The Mg(2+) site is built by D72 and E142. Residues 149 to 151 (DIE), 188 to 193 (KTKPTQ), and K224 each bind CTP. Residues 188–193 (KTKPTQ) and K224 contribute to the UTP site. The 240-residue stretch at 294-533 (RLGLVGKYVQ…IEAALLHSRN (240 aa)) folds into the Glutamine amidotransferase type-1 domain. An L-glutamine-binding site is contributed by G353. C380 (nucleophile; for glutamine hydrolysis) is an active-site residue. Residues 381-384 (LGMQ), E404, and R461 contribute to the L-glutamine site. Active-site residues include H506 and E508.

It belongs to the CTP synthase family. As to quaternary structure, homotetramer.

The enzyme catalyses UTP + L-glutamine + ATP + H2O = CTP + L-glutamate + ADP + phosphate + 2 H(+). The catalysed reaction is L-glutamine + H2O = L-glutamate + NH4(+). It catalyses the reaction UTP + NH4(+) + ATP = CTP + ADP + phosphate + 2 H(+). Its pathway is pyrimidine metabolism; CTP biosynthesis via de novo pathway; CTP from UDP: step 2/2. Allosterically activated by GTP, when glutamine is the substrate; GTP has no effect on the reaction when ammonia is the substrate. The allosteric effector GTP functions by stabilizing the protein conformation that binds the tetrahedral intermediate(s) formed during glutamine hydrolysis. Inhibited by the product CTP, via allosteric rather than competitive inhibition. In terms of biological role, catalyzes the ATP-dependent amination of UTP to CTP with either L-glutamine or ammonia as the source of nitrogen. Regulates intracellular CTP levels through interactions with the four ribonucleotide triphosphates. The protein is CTP synthase of Chlamydia abortus (strain DSM 27085 / S26/3) (Chlamydophila abortus).